Consider the following 83-residue polypeptide: UPF0512 protein I (83 aa).

The protein belongs to the UPF0512 family.

This Dictyostelium discoideum (Social amoeba) protein is UPF0512 protein I.